We begin with the raw amino-acid sequence, 71 residues long: ATP synthase subunit c (71 aa).

The next 2 helical transmembrane spans lie at 5–25 (AIGI…AIIV) and 47–67 (FIGA…AFLL).

It belongs to the ATPase C chain family. F-type ATPases have 2 components, F(1) - the catalytic core - and F(0) - the membrane proton channel. F(1) has five subunits: alpha(3), beta(3), gamma(1), delta(1), epsilon(1). F(0) has three main subunits: a(1), b(2) and c(10-14). The alpha and beta chains form an alternating ring which encloses part of the gamma chain. F(1) is attached to F(0) by a central stalk formed by the gamma and epsilon chains, while a peripheral stalk is formed by the delta and b chains.

It localises to the cell membrane. F(1)F(0) ATP synthase produces ATP from ADP in the presence of a proton or sodium gradient. F-type ATPases consist of two structural domains, F(1) containing the extramembraneous catalytic core and F(0) containing the membrane proton channel, linked together by a central stalk and a peripheral stalk. During catalysis, ATP synthesis in the catalytic domain of F(1) is coupled via a rotary mechanism of the central stalk subunits to proton translocation. In terms of biological role, key component of the F(0) channel; it plays a direct role in translocation across the membrane. A homomeric c-ring of between 10-14 subunits forms the central stalk rotor element with the F(1) delta and epsilon subunits. The sequence is that of ATP synthase subunit c from Shouchella clausii (strain KSM-K16) (Alkalihalobacillus clausii).